The following is a 132-amino-acid chain: Probable histone H2A.2 (132 aa).

The protein belongs to the histone H2A family. The nucleosome is a histone octamer containing two molecules each of H2A, H2B, H3 and H4 assembled in one H3-H4 heterotetramer and two H2A-H2B heterodimers. The octamer wraps approximately 147 bp of DNA. Not ubiquitinated. In terms of tissue distribution, expressed mainly in non-dividing tissues of the plant. Also found in meristems and dividing cells.

It is found in the nucleus. The protein localises to the chromosome. In terms of biological role, core component of nucleosome. Nucleosomes wrap and compact DNA into chromatin, limiting DNA accessibility to the cellular machineries which require DNA as a template. Histones thereby play a central role in transcription regulation, DNA repair, DNA replication and chromosomal stability. DNA accessibility is regulated via a complex set of post-translational modifications of histones, also called histone code, and nucleosome remodeling. This chain is Probable histone H2A.2, found in Arabidopsis thaliana (Mouse-ear cress).